A 401-amino-acid polypeptide reads, in one-letter code: NAD(P)H-quinone oxidoreductase subunit H, chloroplastic (401 aa).

The protein belongs to the complex I 49 kDa subunit family. In terms of assembly, NDH is composed of at least 16 different subunits, 5 of which are encoded in the nucleus.

The protein resides in the plastid. It is found in the chloroplast thylakoid membrane. It catalyses the reaction a plastoquinone + NADH + (n+1) H(+)(in) = a plastoquinol + NAD(+) + n H(+)(out). It carries out the reaction a plastoquinone + NADPH + (n+1) H(+)(in) = a plastoquinol + NADP(+) + n H(+)(out). Its function is as follows. NDH shuttles electrons from NAD(P)H:plastoquinone, via FMN and iron-sulfur (Fe-S) centers, to quinones in the photosynthetic chain and possibly in a chloroplast respiratory chain. The immediate electron acceptor for the enzyme in this species is believed to be plastoquinone. Couples the redox reaction to proton translocation, and thus conserves the redox energy in a proton gradient. This is NAD(P)H-quinone oxidoreductase subunit H, chloroplastic from Aethionema cordifolium (Lebanon stonecress).